Consider the following 209-residue polypeptide: Potassium-transporting ATPase KdpC subunit (209 aa).

A helical membrane pass occupies residues 11–31 (MILALTVLTGLAYPLAVTAVA). The tract at residues 188-209 (AQAPTPRQPEPGHPEPGRPEVR) is disordered. Basic and acidic residues predominate over residues 197–209 (EPGHPEPGRPEVR).

This sequence belongs to the KdpC family. As to quaternary structure, the system is composed of three essential subunits: KdpA, KdpB and KdpC.

It is found in the cell inner membrane. In terms of biological role, part of the high-affinity ATP-driven potassium transport (or Kdp) system, which catalyzes the hydrolysis of ATP coupled with the electrogenic transport of potassium into the cytoplasm. This subunit acts as a catalytic chaperone that increases the ATP-binding affinity of the ATP-hydrolyzing subunit KdpB by the formation of a transient KdpB/KdpC/ATP ternary complex. The chain is Potassium-transporting ATPase KdpC subunit from Rhodospirillum centenum (strain ATCC 51521 / SW).